The chain runs to 577 residues: E3 ubiquitin protein ligase RIN3 (577 aa).

Transmembrane regions (helical) follow at residues 3-23, 58-78, 120-140, 162-182, 191-211, and 272-292; these read ITYLHISVATTALSFVGLQVW, TTIALLASFVLNIYILLVLSL, GVLWTIWLTVLCTLKMFQALA, YSALFMVLSTDLCWIKLSLMI, YLLLLFEPCGIAFETLQALLI, and YLHIWWLHGMAFHLVDAVLFL. The segment at 337–379 adopts an RING-type; atypical zinc-finger fold; it reads CAICREPMAKAKRLHCNHLFHLGCLRSWLDQGLNEVYSCPTCR. A CUE domain is found at 537-577; sequence SILAMAETVREVLPHVPDEIIFQDLQRTNSVSVTVNNLLQM.

Interacts (via C-terminus) with RPM1 (via N-terminus).

The protein resides in the membrane. It carries out the reaction S-ubiquitinyl-[E2 ubiquitin-conjugating enzyme]-L-cysteine + [acceptor protein]-L-lysine = [E2 ubiquitin-conjugating enzyme]-L-cysteine + N(6)-ubiquitinyl-[acceptor protein]-L-lysine.. It participates in protein modification; protein ubiquitination. In terms of biological role, E3 ubiquitin protein ligase that acts as a positive regulator of RPM1- and RPS2-dependent hypersensitive response (HR), in association with RIN2. Probably not required for RPM1 degradation during HR. The chain is E3 ubiquitin protein ligase RIN3 (RIN3) from Arabidopsis thaliana (Mouse-ear cress).